Here is a 97-residue protein sequence, read N- to C-terminus: MKQTVLLLFTALFLSGCSVASADDSVPRFTEEGKYIGSADPHTIAVSLNGEETMIQVPKDKRDECESLPDQTHVLVKYTKKDNGTLQLEDIQLRKNS.

The N-terminal stretch at 1–16 is a signal peptide; the sequence is MKQTVLLLFTALFLSG. The N-palmitoyl cysteine moiety is linked to residue cysteine 17. The S-diacylglycerol cysteine moiety is linked to residue cysteine 17.

The protein localises to the cell membrane. This is an uncharacterized protein from Bacillus subtilis (strain 168).